We begin with the raw amino-acid sequence, 617 residues long: Secretogranin-2 (617 aa).

A signal peptide spans 1-30 (MAGAKAYRLGAVLLLIHLIFLISGAEAASF). Tyr153 carries the sulfotyrosine modification. Ser176 and Ser270 each carry phosphoserine. 2 stretches are compositionally biased toward basic and acidic residues: residues 261-286 (TQTQEEVRDSKENTEKNEQINEEMKR) and 295-307 (EENRRESKDQLSE). The interval 261-307 (TQTQEEVRDSKENTEKNEQINEEMKRSGQLGLPDEENRRESKDQLSE) is disordered. Phosphoserine is present on residues Ser434, Ser532, Ser555, and Ser556.

This sequence belongs to the chromogranin/secretogranin protein family. As to quaternary structure, interacts with Secretogranin III/SCG3.

It localises to the secreted. Functionally, neuroendocrine protein of the granin family that regulates the biogenesis of secretory granules. This chain is Secretogranin-2 (Scg2), found in Mus musculus (Mouse).